Reading from the N-terminus, the 262-residue chain is 3-deoxy-manno-octulosonate cytidylyltransferase (262 aa).

This sequence belongs to the KdsB family.

The protein resides in the cytoplasm. It catalyses the reaction 3-deoxy-alpha-D-manno-oct-2-ulosonate + CTP = CMP-3-deoxy-beta-D-manno-octulosonate + diphosphate. The protein operates within nucleotide-sugar biosynthesis; CMP-3-deoxy-D-manno-octulosonate biosynthesis; CMP-3-deoxy-D-manno-octulosonate from 3-deoxy-D-manno-octulosonate and CTP: step 1/1. Its pathway is bacterial outer membrane biogenesis; lipopolysaccharide biosynthesis. Activates KDO (a required 8-carbon sugar) for incorporation into bacterial lipopolysaccharide in Gram-negative bacteria. The sequence is that of 3-deoxy-manno-octulosonate cytidylyltransferase from Acidovorax sp. (strain JS42).